Consider the following 76-residue polypeptide: Omega-conotoxin-like TeAr94 (76 aa).

A signal peptide spans 1–22 (MKLTCMMIVAVLFLTAWTFVTA). A propeptide spanning residues 23 to 50 (VPHSSNALENLYLKAHHEMNNPEDSELN) is cleaved from the precursor. 3 cysteine pairs are disulfide-bonded: cysteine 53–cysteine 67, cysteine 60–cysteine 71, and cysteine 66–cysteine 75.

It belongs to the conotoxin O1 superfamily. Expressed by the venom duct.

It is found in the secreted. Functionally, omega-conotoxins act at presynaptic membranes, they bind and block voltage-gated calcium channels. This Conus textile (Cloth-of-gold cone) protein is Omega-conotoxin-like TeAr94.